A 304-amino-acid chain; its full sequence is Putative S-adenosyl-L-methionine-dependent methyltransferase MAV_4444 (304 aa).

Residues Asp-130 and 159-160 contribute to the S-adenosyl-L-methionine site; that span reads DL.

It belongs to the UPF0677 family.

In terms of biological role, exhibits S-adenosyl-L-methionine-dependent methyltransferase activity. The protein is Putative S-adenosyl-L-methionine-dependent methyltransferase MAV_4444 of Mycobacterium avium (strain 104).